Reading from the N-terminus, the 391-residue chain is Ribonuclease 3-like protein 2 (391 aa).

Positions 7–26 (PEYNFPAITRCSLSNSLPHR) match the Nuclear export signal motif. In terms of domain architecture, RNase III spans 60–203 (MEAVEKILNY…LAGAVYVDVN (144 aa)). 3 residues coordinate Mg(2+): E96, D189, and E192. DRBM domains lie at 218–294 (EPIV…KLSE) and 313–387 (HAKT…ALRK). The cysteines at positions 240 and 322 are disulfide-linked. Positions 371–387 (KKAESSSAYHMIRALRK) match the Bipartite nuclear localization motif.

In terms of assembly, homodimer; disulfide-linked. Mg(2+) is required as a cofactor. Requires Mn(2+) as cofactor. As to expression, expressed in seeds, leaves and flower buds.

The protein localises to the nucleus. Its subcellular location is the cytoplasm. Ribonuclease that cleaves double-stranded RNA (dsRNA). Required for 3'-external transcribed spacer (ETS) cleavage of the pre-rRNA precursors. May promote the production of 21 nucleotide small interfering RNA (siRNA) during post-transcriptional gene silencing (PTGS). This chain is Ribonuclease 3-like protein 2 (RTL2), found in Arabidopsis thaliana (Mouse-ear cress).